The following is a 430-amino-acid chain: MLDPNLLRNEPDAVAEKLARRGFKLDVDKLRALEERRKVLQVNTENLQAERNSRSKSIGQAKARGEDIEPLRLEVNKLGEELDAAKAELDTLLAEIRDIALTIPNLPADEVPVGKDENDNVEVSRWGTPREFDFEIRDHVTLGEMHSGLDFAAAVKLTGSRFVVMKGQIARMHRALSQFMLDLHTEQHGYSENYVPYLVNHDTLYGTGQLPKFAGDLFHTRPLEEEADSSNYALIPTAEVPLTNLVRDEIIDEDQLPIKMTAHTPCFRSEAGSYGRDTRGLIRMHQFDKVEMVQIVRPEDSMAALEEMTGHAEKVLQLLGLPYRKIILCTGDMGFGACKTYDLEVWVPAQNTYREISSCSNVWDFQARRMQARCRSKSDKKTRLVHTLNGSGLAVGRTLVAVMENYQQADGRIEVPEVLRPYMNGLEYIG.

237–239 (TAE) serves as a coordination point for L-serine. 268 to 270 (RSE) is a binding site for ATP. Residue Glu291 coordinates L-serine. 355-358 (EISS) is an ATP binding site. Ser391 serves as a coordination point for L-serine.

It belongs to the class-II aminoacyl-tRNA synthetase family. Type-1 seryl-tRNA synthetase subfamily. As to quaternary structure, homodimer. The tRNA molecule binds across the dimer.

It is found in the cytoplasm. It catalyses the reaction tRNA(Ser) + L-serine + ATP = L-seryl-tRNA(Ser) + AMP + diphosphate + H(+). The catalysed reaction is tRNA(Sec) + L-serine + ATP = L-seryl-tRNA(Sec) + AMP + diphosphate + H(+). It functions in the pathway aminoacyl-tRNA biosynthesis; selenocysteinyl-tRNA(Sec) biosynthesis; L-seryl-tRNA(Sec) from L-serine and tRNA(Sec): step 1/1. Catalyzes the attachment of serine to tRNA(Ser). Is also able to aminoacylate tRNA(Sec) with serine, to form the misacylated tRNA L-seryl-tRNA(Sec), which will be further converted into selenocysteinyl-tRNA(Sec). This Salmonella enteritidis PT4 (strain P125109) protein is Serine--tRNA ligase.